The sequence spans 229 residues: NAD-dependent protein deacylase (229 aa).

The Deacetylase sirtuin-type domain maps to 1–227 (MKNLVILSGA…QDLMPKLIEM (227 aa)). NAD(+) is bound at residue 9 to 28 (GAGISAESGIKTFRDADGLW). Substrate is bound by residues Tyr53 and Arg56. 86-89 (QNVD) serves as a coordination point for NAD(+). Catalysis depends on His104, which acts as the Proton acceptor. 169–171 (GTS) contributes to the NAD(+) binding site.

It belongs to the sirtuin family. Class III subfamily.

It localises to the cytoplasm. The enzyme catalyses N(6)-acetyl-L-lysyl-[protein] + NAD(+) + H2O = 2''-O-acetyl-ADP-D-ribose + nicotinamide + L-lysyl-[protein]. It carries out the reaction N(6)-succinyl-L-lysyl-[protein] + NAD(+) + H2O = 2''-O-succinyl-ADP-D-ribose + nicotinamide + L-lysyl-[protein]. Functionally, NAD-dependent lysine deacetylase and desuccinylase that specifically removes acetyl and succinyl groups on target proteins. Modulates the activities of several proteins which are inactive in their acylated form. This Helicobacter pylori (strain ATCC 700392 / 26695) (Campylobacter pylori) protein is NAD-dependent protein deacylase.